A 254-amino-acid chain; its full sequence is Undecaprenyl-diphosphatase 3 (254 aa).

The next 8 helical transmembrane spans lie at 8-28 (TEFL…LIGF), 33-53 (AKVF…VIFW), 74-94 (LHII…HSAI), 97-117 (VLFG…LMIV), 133-153 (ITYK…WPGF), 174-194 (AEYT…LDLI), 207-227 (LFAT…VSFL), and 233-253 (VKLT…YFFI).

It belongs to the UppP family.

The protein resides in the cell membrane. The enzyme catalyses di-trans,octa-cis-undecaprenyl diphosphate + H2O = di-trans,octa-cis-undecaprenyl phosphate + phosphate + H(+). Its function is as follows. Catalyzes the dephosphorylation of undecaprenyl diphosphate (UPP). Confers resistance to bacitracin. This is Undecaprenyl-diphosphatase 3 from Bacillus thuringiensis (strain Al Hakam).